The following is a 191-amino-acid chain: Ion-translocating oxidoreductase complex subunit B (191 aa).

The tract at residues 1 to 26 is hydrophobic; sequence MSAVLIAVLALLALCLLGGAILGFAA. A 4Fe-4S domain is found at 32 to 90; that stretch reads EGDPIAEQINALLPQTQCGQCGYPGCKPYAEAIAGGDKINKCPPGGEATIQALADLLDV. [4Fe-4S] cluster contacts are provided by C49, C52, C57, C73, C114, C117, C120, C124, C144, C147, C150, and C154. 2 consecutive 4Fe-4S ferredoxin-type domains span residues 105–134 and 135–164; these read MVAY…GAAR and QMHT…MIEV.

This sequence belongs to the 4Fe4S bacterial-type ferredoxin family. RnfB subfamily. As to quaternary structure, the complex is composed of six subunits: RnfA, RnfB, RnfC, RnfD, RnfE and RnfG. [4Fe-4S] cluster serves as cofactor.

Its subcellular location is the cell inner membrane. In terms of biological role, part of a membrane-bound complex that couples electron transfer with translocation of ions across the membrane. The polypeptide is Ion-translocating oxidoreductase complex subunit B (Stutzerimonas stutzeri (strain A1501) (Pseudomonas stutzeri)).